The sequence spans 476 residues: MTWETVIGLEIHVQLNTKSKIFSGASTAFGAEPNAHASVVECALPGVLPVMNREVVEKAIKLGLALDAKINQKNVFDRKNYFYPDLPKGYQISQLDLPIVEHGKLEIVVGDDVKTINVTRAHMEEDAGKSVHEGLNGATGIDLNRAGTPLLEVVSEPEMRSAAEAVAYAKALHSLVTWLDICDGNMAEGSFRVDANVSVRPKGQEEFGTRREIKNLNSFRFLEQAINYEAEAQIEILEDGGKVQQATMLFDPEKGETRVMRLKEDAHDYRYFPDPDLLPVIISDAQMQKAKAEMPELPKEMAARFVADYGVSEYDARLLTASRAQAAYFEEAAKESGQGKLTANWMNGELAAALNKEGMELADSPITAPRLAALVGKIADGTLSSKLAKKAFEAMWAEPEATIAEIIEKHGLQQMTDTGEIEAMVDEVLANNAKAVEQFKSGNEKALNAIVGQVMKASKGKANPAQVQELIKAKLA.

This sequence belongs to the GatB/GatE family. GatB subfamily. As to quaternary structure, heterotrimer of A, B and C subunits.

The enzyme catalyses L-glutamyl-tRNA(Gln) + L-glutamine + ATP + H2O = L-glutaminyl-tRNA(Gln) + L-glutamate + ADP + phosphate + H(+). It catalyses the reaction L-aspartyl-tRNA(Asn) + L-glutamine + ATP + H2O = L-asparaginyl-tRNA(Asn) + L-glutamate + ADP + phosphate + 2 H(+). Functionally, allows the formation of correctly charged Asn-tRNA(Asn) or Gln-tRNA(Gln) through the transamidation of misacylated Asp-tRNA(Asn) or Glu-tRNA(Gln) in organisms which lack either or both of asparaginyl-tRNA or glutaminyl-tRNA synthetases. The reaction takes place in the presence of glutamine and ATP through an activated phospho-Asp-tRNA(Asn) or phospho-Glu-tRNA(Gln). This chain is Aspartyl/glutamyl-tRNA(Asn/Gln) amidotransferase subunit B, found in Neisseria meningitidis serogroup B (strain ATCC BAA-335 / MC58).